We begin with the raw amino-acid sequence, 160 residues long: uncharacterized protein (160 aa).

Positions 1 to 23 are cleaved as a signal peptide; that stretch reads MSIPHSVFSALLVFVALATTTLA. Residues 24–132 are Cytoplasmic-facing; that stretch reads STEACLPTNK…DPNTAYWSSD (109 aa). The chain crosses the membrane as a helical span at residues 133-155; that stretch reads LFGFYTTPTNVTVEMTGYLIWSM. At 156–160 the chain is on the extracellular side; sequence GNRRR.

This sequence to yeast protein FLO1.

It localises to the cell membrane. This is an uncharacterized protein from Saccharomyces cerevisiae (strain ATCC 204508 / S288c) (Baker's yeast).